A 334-amino-acid polypeptide reads, in one-letter code: NADH-ubiquinone oxidoreductase chain 1 (334 aa).

The next 9 helical transmembrane spans lie at 4–24 (FVFL…IIVI), 82–102 (FIYV…WGVI), 115–135 (IGIL…LMSG), 161–181 (IGLI…TEIV), 187–207 (GIWF…SALA), 222–242 (ELVS…FFLA), 247–267 (IILM…SPIV), 268–288 (FFKG…LLFI), and 311–331 (LPLS…LNGL).

It belongs to the complex I subunit 1 family.

It is found in the mitochondrion inner membrane. The enzyme catalyses a ubiquinone + NADH + 5 H(+)(in) = a ubiquinol + NAD(+) + 4 H(+)(out). In terms of biological role, core subunit of the mitochondrial membrane respiratory chain NADH dehydrogenase (Complex I) that is believed to belong to the minimal assembly required for catalysis. Complex I functions in the transfer of electrons from NADH to the respiratory chain. The immediate electron acceptor for the enzyme is believed to be ubiquinone. This chain is NADH-ubiquinone oxidoreductase chain 1 (ND1), found in Metridium senile (Brown sea anemone).